The following is a 275-amino-acid chain: Ciliary microtubule inner protein 2B (275 aa).

Disordered stretches follow at residues 62–84 (PPIRPPRSPEVPRESLPVRRGQE) and 125–169 (EKQG…SPYS). Basic and acidic residues-rich tracts occupy residues 71–84 (EVPRESLPVRRGQE) and 125–147 (EKQGSEELPKEAKGRKDTEKDQV).

It belongs to the CIMIP2 family. As to quaternary structure, microtubule inner protein component of sperm flagellar doublet microtubules. In terms of tissue distribution, expressed in airway epithelial cells.

The protein localises to the cytoplasm. It is found in the cytoskeleton. It localises to the cilium axoneme. Its subcellular location is the flagellum axoneme. In terms of biological role, microtubule inner protein (MIP) part of the dynein-decorated doublet microtubules (DMTs) in cilia axoneme, which is required for motile cilia beating. The sequence is that of Ciliary microtubule inner protein 2B from Homo sapiens (Human).